The sequence spans 225 residues: 7-cyano-7-deazaguanine synthase (225 aa).

ATP is bound at residue Tyr9–Leu19. Cys188, Cys198, Cys201, and Cys204 together coordinate Zn(2+).

Belongs to the QueC family. The cofactor is Zn(2+).

The enzyme catalyses 7-carboxy-7-deazaguanine + NH4(+) + ATP = 7-cyano-7-deazaguanine + ADP + phosphate + H2O + H(+). It functions in the pathway purine metabolism; 7-cyano-7-deazaguanine biosynthesis. Catalyzes the ATP-dependent conversion of 7-carboxy-7-deazaguanine (CDG) to 7-cyano-7-deazaguanine (preQ(0)). The chain is 7-cyano-7-deazaguanine synthase from Geobacter sp. (strain M21).